The chain runs to 564 residues: 4-coumarate--CoA ligase 1 (564 aa).

Residues serine 209, serine 210, glycine 211, threonine 212, threonine 213, and lysine 217 each coordinate ATP. (E)-4-coumaroyl-AMP is bound by residues tyrosine 259 and threonine 263. Arginine 280 contributes to the CoA binding site. An SBD1 region spans residues 282 to 351; that stretch reads DLAAMMDLVE…AKLPGAVLGQ (70 aa). Residues alanine 329, glutamine 351, glycine 352, threonine 356, and methionine 364 each contribute to the (E)-4-coumaroyl-AMP site. Residues glutamine 351, glycine 352, and threonine 356 each coordinate ATP. Residues 352–419 are SBD2; sequence GYGMTEAGPV…IRGQQIMKGY (68 aa). ATP contacts are provided by aspartate 440 and arginine 455. Residues lysine 457 and lysine 461 each coordinate (E)-4-coumaroyl-AMP. Residues arginine 463 and glycine 464 each coordinate CoA. Lysine 547 lines the ATP pocket.

The protein belongs to the ATP-dependent AMP-binding enzyme family. Mg(2+) is required as a cofactor. As to expression, expressed in roots, stems, leaf blades and leaf sheaths.

It catalyses the reaction (E)-ferulate + ATP + CoA = (E)-feruloyl-CoA + AMP + diphosphate. The catalysed reaction is (E)-4-coumarate + ATP + CoA = (E)-4-coumaroyl-CoA + AMP + diphosphate. The enzyme catalyses (E)-cinnamate + ATP + CoA = (E)-cinnamoyl-CoA + AMP + diphosphate. It carries out the reaction (E)-caffeate + ATP + CoA = (E)-caffeoyl-CoA + AMP + diphosphate. It catalyses the reaction (E)-ferulate + ATP + H(+) = (E)-feruloyl-AMP + diphosphate. The catalysed reaction is (E)-feruloyl-AMP + CoA = (E)-feruloyl-CoA + AMP + H(+). The enzyme catalyses (E)-4-coumarate + ATP + H(+) = (E)-4-coumaroyl-AMP + diphosphate. It carries out the reaction (E)-4-coumaroyl-AMP + CoA = (E)-4-coumaroyl-CoA + AMP + H(+). It catalyses the reaction (E)-caffeate + ATP + H(+) = (E)-caffeoyl-AMP + diphosphate. The catalysed reaction is (E)-caffeoyl-AMP + CoA = (E)-caffeoyl-CoA + AMP + H(+). It participates in phytoalexin biosynthesis; 3,4',5-trihydroxystilbene biosynthesis; 3,4',5-trihydroxystilbene from trans-4-coumarate: step 1/2. Functionally, involved in the phenylpropanoid metabolism by mediating the activation of a number of hydroxycinnamates for the biosynthesis of monolignols and other phenolic secondary metabolites. Catalyzes the formation of CoA esters of cinnamate, 4-coumarate, caffeate and ferulate. Is more efficient with substrates in the following order: ferulate &gt; 4-coumarate &gt; cinnamate &gt; caffeate. Cannot convert sinapate to its corresponding CoA ester. Follows a two-step reaction mechanism, wherein the carboxylate substrate first undergoes adenylation by ATP, followed by a thioesterification in the presence of CoA to yield the final CoA thioester. This chain is 4-coumarate--CoA ligase 1, found in Oryza sativa subsp. japonica (Rice).